The chain runs to 447 residues: Secretin receptor (447 aa).

The signal sequence occupies residues 1-28; that stretch reads MLSTMSPRLSLLLLWLLLLINAAHPVGA. The Extracellular portion of the chain corresponds to 29-140; it reads LPRLCDVRRV…NERRHAYLLK (112 aa). 3 disulfides stabilise this stretch: Cys46-Cys74, Cys65-Cys106, and Cys88-Cys122. Asn71, Asn99, Asn105, and Asn127 each carry an N-linked (GlcNAc...) asparagine glycan. A helical transmembrane segment spans residues 141–166; the sequence is LKVMYTVGYSSSLAMLLVALSILCSF. Residues 167–173 lie on the Cytoplasmic side of the membrane; sequence RRLHCTR. Residues 174 to 194 form a helical membrane-spanning segment; the sequence is NYIHMHLFVSFILRALSNFIK. The Extracellular segment spans residues 195–215; the sequence is DAVLFPADDVTYCDAHRAGCK. A disulfide bridge connects residues Cys214 and Cys284. The helical transmembrane segment at 216-238 threads the bilayer; the sequence is LVMIFFQYCIMANYAWLLVEGLY. Over 239–253 the chain is Cytoplasmic; it reads LHTLLAISFFSERKC. A helical transmembrane segment spans residues 254–275; the sequence is LQAFVLFGWGSPAIFVALWAVT. Topologically, residues 276 to 290 are extracellular; that stretch reads RHFLEDFGCWDINSN. The N-linked (GlcNAc...) asparagine glycan is linked to Asn290. Residues 291-314 traverse the membrane as a helical segment; that stretch reads ASIWWVIRGPVILSIVINFIFFIN. Residues 315–339 are Cytoplasmic-facing; the sequence is ILRILMRKLRTQETRGNETHHYKRL. The helical transmembrane segment at 340 to 355 threads the bilayer; the sequence is AKSTLLLIPLFGIHYI. Residues 356 to 366 lie on the Extracellular side of the membrane; the sequence is VFAFSPEGAME. Residues 367-390 traverse the membrane as a helical segment; sequence VQLFFELALGSFQGLVVAVLYCFL. The Cytoplasmic segment spans residues 391–447; sequence NGELEVQKKWRQWHLQEFPLRPVALSNSFSNATNGPTHSTKAGTSEQSRSIPGANVI. The span at 423–440 shows a compositional bias: polar residues; sequence TNGPTHSTKAGTSEQSRS. The tract at residues 423-447 is disordered; it reads TNGPTHSTKAGTSEQSRSIPGANVI.

This sequence belongs to the G-protein coupled receptor 2 family. Post-translationally, phosphorylated on Ser and Thr residues at the cytoplasmic C-terminus by G protein-coupled receptor kinases (GRKs). As to expression, in brain, expressed in the hippocampal CA1 region, the lower layer of cerebral cortex, the anterior olfactory nuclei, the anterior ventrolateral thalamus, the lateral region of hypothalamus, substantia nigra, tegmental area and central nucleus of the inferior colliculus, the ventral supramamillary nucleus and the cerebellum. Expressed in brown adipocytes: expression predominates in mature brown adipocytes (at protein level). Detected in the renal medulla, where it localized predominantly on the basolateral membranes of cells in the collecting ducts (blue arrow) and the ascending thick segments of the loop of Henle.

It is found in the cell membrane. The protein localises to the basolateral cell membrane. Functionally, g protein-coupled receptor activated by secretin (SCT), which is involved in different processes such as regulation of the pH of the duodenal content, food intake and water homeostasis. Ligand binding causes a conformation change that triggers signaling via guanine nucleotide-binding proteins (G proteins) and activates cAMP-dependent pathway. Upon binding to secretin, regulates the pH of the duodenum by (1) inhibiting the secretion of gastric acid from the parietal cells of the stomach and (2) stimulating the production of bicarbonate (NaHCO(3)) from the ductal cells of the pancreas. In addition to regulating the pH of the duodenal content, plays a central role in diet induced thermogenesis: acts as a non-sympathetic brown fat (BAT) activator mediating prandial thermogenesis, which consequentially induces satiation. Mechanistically, secretin released by the gut after a meal binds to secretin receptor (SCTR) in brown adipocytes, activating brown fat thermogenesis by stimulating lipolysis, which is sensed in the brain and promotes satiation. Also able to stimulate lipolysis in white adipocytes. Also plays an important role in cellular osmoregulation by regulating renal water reabsorption. Also plays a role in the central nervous system: required for synaptic plasticity. The protein is Secretin receptor of Mus musculus (Mouse).